Consider the following 340-residue polypeptide: Ketol-acid reductoisomerase (NADP(+)) (340 aa).

Positions Met1–Thr183 constitute a KARI N-terminal Rossmann domain. Residues Phe26–Gln29, Ser54, and Asp84–Gln87 contribute to the NADP(+) site. His109 is an active-site residue. Residue Gly135 coordinates NADP(+). Residues Thr184–Ile329 enclose the KARI C-terminal knotted domain. Positions 192, 196, 228, and 232 each coordinate Mg(2+). Ser253 is a substrate binding site.

Belongs to the ketol-acid reductoisomerase family. Mg(2+) serves as cofactor.

The catalysed reaction is (2R)-2,3-dihydroxy-3-methylbutanoate + NADP(+) = (2S)-2-acetolactate + NADPH + H(+). The enzyme catalyses (2R,3R)-2,3-dihydroxy-3-methylpentanoate + NADP(+) = (S)-2-ethyl-2-hydroxy-3-oxobutanoate + NADPH + H(+). It participates in amino-acid biosynthesis; L-isoleucine biosynthesis; L-isoleucine from 2-oxobutanoate: step 2/4. Its pathway is amino-acid biosynthesis; L-valine biosynthesis; L-valine from pyruvate: step 2/4. Its function is as follows. Involved in the biosynthesis of branched-chain amino acids (BCAA). Catalyzes an alkyl-migration followed by a ketol-acid reduction of (S)-2-acetolactate (S2AL) to yield (R)-2,3-dihydroxy-isovalerate. In the isomerase reaction, S2AL is rearranged via a Mg-dependent methyl migration to produce 3-hydroxy-3-methyl-2-ketobutyrate (HMKB). In the reductase reaction, this 2-ketoacid undergoes a metal-dependent reduction by NADPH to yield (R)-2,3-dihydroxy-isovalerate. The sequence is that of Ketol-acid reductoisomerase (NADP(+)) from Campylobacter fetus subsp. fetus (strain 82-40).